Reading from the N-terminus, the 323-residue chain is Arginase-1 (323 aa).

Residues 1-27 form a disordered region; that stretch reads MSSKPKPIEIIGAPFSKGQPRGGVEKG. At Lys17 the chain carries N6-succinyllysine. Residues Ser62 and Ser72 each carry the phosphoserine modification. Lys75 is modified (N6-succinyllysine). Mn(2+) is bound by residues His101, Asp124, His126, and Asp128. Residues 126–130 and 137–139 each bind substrate; these read HTDIN and SGN. Residue Ser163 is modified to Phosphoserine. Substrate is bound at residue Asp183. Position 217 is a phosphoserine (Ser217). Mn(2+) contacts are provided by Asp232 and Asp234. Substrate contacts are provided by Thr246 and Glu277. Thr281 carries the post-translational modification Phosphothreonine.

It belongs to the arginase family. Homotrimer. Interacts with CMTM6. Mn(2+) serves as cofactor. In terms of tissue distribution, detected in liver (at protein level).

Its subcellular location is the cytoplasm. It is found in the cytoplasmic granule. The catalysed reaction is L-arginine + H2O = urea + L-ornithine. It participates in nitrogen metabolism; urea cycle; L-ornithine and urea from L-arginine: step 1/1. Inactivated by diethyl pyrocarbonate (DEPC). In terms of biological role, key element of the urea cycle converting L-arginine to urea and L-ornithine, which is further metabolized into metabolites proline and polyamides that drive collagen synthesis and bioenergetic pathways critical for cell proliferation, respectively; the urea cycle takes place primarily in the liver and, to a lesser extent, in the kidneys. Its function is as follows. Functions in L-arginine homeostasis in nonhepatic tissues characterized by the competition between nitric oxide synthase (NOS) and arginase for the available intracellular substrate arginine. Arginine metabolism is a critical regulator of innate and adaptive immune responses. Involved in an antimicrobial effector pathway in polymorphonuclear granulocytes (PMN). Upon PMN cell death is liberated from the phagolysosome and depletes arginine in the microenvironment leading to suppressed T cell and natural killer (NK) cell proliferation and cytokine secretion. In group 2 innate lymphoid cells (ILC2s) promotes acute type 2 inflammation in the lung and is involved in optimal ILC2 proliferation but not survival. Plays a role in the immune response of alternatively activated or M2 macrophages in processes such as wound healing and tissue regeneration, immune defense against multicellular pathogens and parasites, and immune suppression and allergic inflammation; the regulatory outcome seems to be organ specific. In tumor-infiltrating dendritic cells (DCs) and myeloid-derived suppressor cells (MDSCs) plays a role in suppression of T cell-mediated antitumor immunity. In Rattus norvegicus (Rat), this protein is Arginase-1 (Arg1).